Consider the following 93-residue polypeptide: Small ribosomal subunit protein bS20 (93 aa).

The span at M1–N18 shows a compositional bias: basic and acidic residues. The interval M1–K25 is disordered.

The protein belongs to the bacterial ribosomal protein bS20 family.

Functionally, binds directly to 16S ribosomal RNA. The sequence is that of Small ribosomal subunit protein bS20 from Chlorobium chlorochromatii (strain CaD3).